Here is a 184-residue protein sequence, read N- to C-terminus: Chaperone protein YcdY (184 aa).

It belongs to the TorD/DmsD family. As to quaternary structure, interacts with YcdX.

Functionally, acts as a chaperone that increases YcdX activity, maybe by facilitating the correct insertion of the zinc ions into the catalytic site of YcdX. Involved in the swarming motility process. The sequence is that of Chaperone protein YcdY (ycdY) from Escherichia coli (strain K12).